The sequence spans 219 residues: 2-C-methyl-D-erythritol 4-phosphate cytidylyltransferase (219 aa).

It belongs to the IspD/TarI cytidylyltransferase family. IspD subfamily.

The enzyme catalyses 2-C-methyl-D-erythritol 4-phosphate + CTP + H(+) = 4-CDP-2-C-methyl-D-erythritol + diphosphate. It participates in isoprenoid biosynthesis; isopentenyl diphosphate biosynthesis via DXP pathway; isopentenyl diphosphate from 1-deoxy-D-xylulose 5-phosphate: step 2/6. Its function is as follows. Catalyzes the formation of 4-diphosphocytidyl-2-C-methyl-D-erythritol from CTP and 2-C-methyl-D-erythritol 4-phosphate (MEP). The sequence is that of 2-C-methyl-D-erythritol 4-phosphate cytidylyltransferase from Chlamydia trachomatis serovar D (strain ATCC VR-885 / DSM 19411 / UW-3/Cx).